The chain runs to 1066 residues: Elongation factor 3 (1066 aa).

HEAT repeat units follow at residues 112–149 (FIFE…VMSP), 151–188 (AAQQ…ACPE), 192–229 (ALMP…LISN), 231–268 (DIER…EVDS), 269–306 (ATLA…LVDN), and 312–353 (PFLG…VTGD). Thr-418 provides a ligand contact to ADP. ABC transporter domains follow at residues 454–672 (EEGE…YAEL) and 699–1015 (IKMK…KKEE). ADP contacts are provided by Asn-735, Glu-944, Asn-947, and His-973. Residues 997–1066 (GHDWTESNSK…YDSADELEDL (70 aa)) form a disordered region. Positions 1042 to 1054 (RKAKKDRMARKKA) are enriched in basic residues.

This sequence belongs to the ABC transporter superfamily. ABCF family. EF3 subfamily.

It localises to the cytoplasm. It is found in the cytosol. The catalysed reaction is ATP + H2O = ADP + phosphate + H(+). It participates in protein biosynthesis; polypeptide chain elongation. In terms of biological role, ribosome-dependent ATPase that functions in cytoplasmic translation elongation. Required for the ATP-dependent release of deacylated tRNA from the ribosomal E-site during protein biosynthesis. Stimulates the eEF1A-dependent binding of aminoacyl-tRNA to the ribosomal A-site, which has reduced affinity for tRNA as long as the E-site is occupied. Assists translation termination by stimulating the release of nascent protein from the ribosome by release factors. This Mycosarcoma maydis (Corn smut fungus) protein is Elongation factor 3.